We begin with the raw amino-acid sequence, 232 residues long: Putative B3 domain-containing protein Os11g0242900 (232 aa).

The TF-B3 1 DNA-binding region spans 1–51 (MTVELEKIAGSFFISKGWKTFVHRTGLLSGQYIRFQVLTPSKINVLLFDKK). Residues 92-121 (SHTSNKETSSDSRTESMTDIPSSSDNSGET) form a disordered region. Over residues 95–107 (SNKETSSDSRTES) the composition is skewed to basic and acidic residues. The span at 108–121 (MTDIPSSSDNSGET) shows a compositional bias: polar residues. The TF-B3 2 DNA-binding region spans 140-232 (DIKNYISIIG…PNVKITIDVL (93 aa)).

It is found in the nucleus. The sequence is that of Putative B3 domain-containing protein Os11g0242900 from Oryza sativa subsp. japonica (Rice).